The following is a 59-amino-acid chain: Small ribosomal subunit protein bS21 (59 aa).

The interval 35 to 59 (REHYEKPSVKKKKKSEAAKRKKRNF) is disordered. Residues 43–59 (VKKKKKSEAAKRKKRNF) show a composition bias toward basic residues.

The protein belongs to the bacterial ribosomal protein bS21 family.

The polypeptide is Small ribosomal subunit protein bS21 (Finegoldia magna (strain ATCC 29328 / DSM 20472 / WAL 2508) (Peptostreptococcus magnus)).